The following is a 328-amino-acid chain: MTVQTERPPSGPSDVRKADGGGTGGTRARAASRAGALAPYLLLLPAAAATVLLLGWPLVKDGLLSFQNLNMAQLIQHVTEWTGFDNYKEVLTGEDFWRVTVRSIIFTAVNVVLTMVVGGLIGLLLARLGRVMRFVLMIGLVLAWAMPVVAATTVYQWLFAQRFGVVNWVLDKLGWHSMADFSWTGSQFSTFFVVTVLIVWMSVPFVAINLYAATTTIPDELYEAAALDGAGMWRSFTSVTLPFLRPFLYATTFLEVIWIFKAFVQVYTFNGGGPDRLTEILPVYAYIEGVGNQHYGMGAAIAVLTILILLGLTAYYLRIVLKQEEDEL.

Residues 1–27 (MTVQTERPPSGPSDVRKADGGGTGGTR) form a disordered region. Transmembrane regions (helical) follow at residues 36–56 (ALAP…LLGW), 104–124 (IIFT…IGLL), 134–154 (FVLM…ATTV), 188–208 (FSTF…FVAI), 247–267 (FLYA…VQVY), and 297–317 (MGAA…AYYL). The ABC transmembrane type-1 domain maps to 100 to 316 (TVRSIIFTAV…LILLGLTAYY (217 aa)).

This sequence belongs to the binding-protein-dependent transport system permease family. The complex is composed of two ATP-binding proteins (MsiK), two transmembrane proteins (DasB and DasC) and a solute-binding protein (DasA).

The protein resides in the cell membrane. In terms of biological role, part of the ABC transporter complex DasABC-MsiK involved in N,N'-diacetylchitobiose ((GlcNAc)2) uptake. Responsible for the translocation of the substrate across the membrane. This chain is Diacetylchitobiose uptake system permease protein DasB, found in Streptomyces coelicolor (strain ATCC BAA-471 / A3(2) / M145).